The primary structure comprises 247 residues: Fumarate reductase iron-sulfur subunit (247 aa).

Tyr-12 serves as a coordination point for a menaquinone. One can recognise a 2Fe-2S ferredoxin-type domain in the interval 14–94 (PEIESAPTFQ…PGPVRVEPMR (81 aa)). Positions 56, 61, and 76 each coordinate [2Fe-2S] cluster. A 4Fe-4S ferredoxin-type domain is found at 140–169 (LDAFKQFSMCINCMLCYSACPVYALDPDFL). The [4Fe-4S] cluster site is built by Cys-149, Cys-152, and Cys-155. Cys-159, Cys-205, and Cys-211 together coordinate [3Fe-4S] cluster. Cys-215 contacts [4Fe-4S] cluster. 226–229 (QRYK) contributes to the a menaquinone binding site.

Belongs to the succinate dehydrogenase/fumarate reductase iron-sulfur protein family. As to quaternary structure, fumarate dehydrogenase forms part of an enzyme complex containing four subunits: a flavoprotein, an iron-sulfur, and two hydrophobic anchor proteins. [2Fe-2S] cluster is required as a cofactor. Requires [3Fe-4S] cluster as cofactor. [4Fe-4S] cluster serves as cofactor.

The protein resides in the cell membrane. The catalysed reaction is a quinone + succinate = fumarate + a quinol. It carries out the reaction a menaquinone + succinate = a menaquinol + fumarate. This is Fumarate reductase iron-sulfur subunit (frdB) from Mycobacterium tuberculosis (strain CDC 1551 / Oshkosh).